The primary structure comprises 157 residues: Protein Smg homolog (157 aa).

It belongs to the Smg family.

The chain is Protein Smg homolog from Tolumonas auensis (strain DSM 9187 / NBRC 110442 / TA 4).